The following is a 486-amino-acid chain: NADH-quinone oxidoreductase subunit N (486 aa).

The next 14 helical transmembrane spans lie at 8–28 (LIAL…ILSI), 36–56 (FIAF…YFLI), 74–94 (ILYI…AYPW), 104–124 (EFYL…ISNH), 125–145 (MASL…LIAY), 160–180 (LVLS…IYAI), 204–224 (VLFG…MVPF), 239–259 (VLSF…LYFF), 270–290 (IFLI…LMAI), 298–318 (FFGY…LVSK), 329–349 (GIFL…INLF), 374–394 (ASIV…LGFF), 407–427 (HLWT…YGYL), and 459–479 (ILIF…NPLI).

Belongs to the complex I subunit 2 family. NDH-1 is composed of 13 different subunits. Subunits NuoA, H, J, K, L, M, N constitute the membrane sector of the complex.

The protein localises to the cell membrane. It catalyses the reaction a quinone + NADH + 5 H(+)(in) = a quinol + NAD(+) + 4 H(+)(out). Functionally, NDH-1 shuttles electrons from NADH, via FMN and iron-sulfur (Fe-S) centers, to quinones in the respiratory chain. The immediate electron acceptor for the enzyme in this species is believed to be ubiquinone. Couples the redox reaction to proton translocation (for every two electrons transferred, four hydrogen ions are translocated across the cytoplasmic membrane), and thus conserves the redox energy in a proton gradient. This is NADH-quinone oxidoreductase subunit N from Buchnera aphidicola subsp. Schizaphis graminum (strain Sg).